A 411-amino-acid polypeptide reads, in one-letter code: Imidazolonepropionase (411 aa).

Fe(3+) is bound by residues histidine 75 and histidine 77. Residues histidine 75 and histidine 77 each contribute to the Zn(2+) site. Residues arginine 84, tyrosine 147, and histidine 180 each coordinate 4-imidazolone-5-propanoate. Residue tyrosine 147 participates in N-formimidoyl-L-glutamate binding. Histidine 245 lines the Fe(3+) pocket. Residue histidine 245 participates in Zn(2+) binding. Residue glutamine 248 coordinates 4-imidazolone-5-propanoate. Aspartate 320 provides a ligand contact to Fe(3+). Residue aspartate 320 participates in Zn(2+) binding. Residues asparagine 322 and glycine 324 each coordinate N-formimidoyl-L-glutamate. Threonine 325 serves as a coordination point for 4-imidazolone-5-propanoate.

It belongs to the metallo-dependent hydrolases superfamily. HutI family. Zn(2+) serves as cofactor. Fe(3+) is required as a cofactor.

It is found in the cytoplasm. The catalysed reaction is 4-imidazolone-5-propanoate + H2O = N-formimidoyl-L-glutamate. Its pathway is amino-acid degradation; L-histidine degradation into L-glutamate; N-formimidoyl-L-glutamate from L-histidine: step 3/3. Its function is as follows. Catalyzes the hydrolytic cleavage of the carbon-nitrogen bond in imidazolone-5-propanoate to yield N-formimidoyl-L-glutamate. It is the third step in the universal histidine degradation pathway. This chain is Imidazolonepropionase, found in Aeromonas salmonicida (strain A449).